A 362-amino-acid chain; its full sequence is H-2 class I histocompatibility antigen, D-K alpha chain (362 aa).

The first 24 residues, 1-24, serve as a signal peptide directing secretion; that stretch reads MGAMVPRTLLLLLAAALAPAQTRA. The interval 25–114 is alpha-1; sequence GPHSLRYFET…LLRYYNQSEG (90 aa). Residues 25-306 lie on the Extracellular side of the membrane; that stretch reads GPHSLRYFET…RWEPPPSTDS (282 aa). N110 is a glycosylation site (N-linked (GlcNAc...) asparagine). An alpha-2 region spans residues 115–206; that stretch reads GSHTIQRLSG…ELGNATLLHT (92 aa). An intrachain disulfide couples C125 to C188. N-linked (GlcNAc...) asparagine glycosylation is found at N200 and N280. The alpha-3 stretch occupies residues 207-298; sequence DSPKAHVTHH…GLPEPLTLRW (92 aa). The Ig-like C1-type domain maps to 209-297; that stretch reads PKAHVTHHPR…EGLPEPLTLR (89 aa). C227 and C283 are disulfide-bonded. The tract at residues 299-306 is connecting peptide; the sequence is EPPPSTDS. The helical transmembrane segment at 307–333 threads the bilayer; that stretch reads YMVIVAVLGVLGAVAIIGAVVAFVMMM. The Cytoplasmic portion of the chain corresponds to 334–362; it reads RRNTGGKGGDYTLTPGSQSSEMSLPDCKA. Residues 340-362 are disordered; the sequence is KGGDYTLTPGSQSSEMSLPDCKA. Phosphoserine occurs at positions 353 and 356.

It belongs to the MHC class I family. Heterodimer of an alpha chain and a beta chain (beta-2-microglobulin). In terms of processing, polyubiquitinated in case of infection by murid herpesvirus 4, by the viral E3 ligase K3 (mK3), leading to target the protein for rapid degradation by the endoplasmic reticulum-associated degradation (ERAD) system. Ubiquitination takes place on lysine, as well as serine and threonine residues present in the cytoplasmic tail. Hydroxylated serine and threonine residues in the cytoplasmic tail are subject to ubiquitination via ester bonds instead of the classical isopeptide linkage. Post-translationally, hydroxylation of residues in the cytoplasmic tail.

It is found in the membrane. Its function is as follows. Involved in the presentation of foreign antigens to the immune system. The sequence is that of H-2 class I histocompatibility antigen, D-K alpha chain (H2-D1) from Mus musculus (Mouse).